We begin with the raw amino-acid sequence, 440 residues long: Long-chain alkane monooxygenase (440 aa).

Residues D58, 137 to 138, Y158, and 227 to 230 contribute to the FMN site; these read SH and AGMS.

The protein belongs to the NtaA/SnaA/DszA monooxygenase family. As to quaternary structure, homodimer.

Its subcellular location is the secreted. It catalyses the reaction a long-chain alkane + FMNH2 + O2 = a long chain fatty alcohol + FMN + H2O + H(+). In terms of biological role, involved in the degradation of long-chain alkanes. Converts alkanes ranging from C(15) to C(36) into their corresponding primary alcohols. The sequence is that of Long-chain alkane monooxygenase from Geobacillus thermodenitrificans (strain NG80-2).